The sequence spans 136 residues: Sec-independent protein translocase protein TatB (136 aa).

A helical membrane pass occupies residues 2-22; that stretch reads FGSVGWGELLVLLIVGLVVLG. The disordered stretch occupies residues 107–136; the sequence is VTEPAPTPIVNPELAKPAEPGPTRYDADAT.

Belongs to the TatB family. In terms of assembly, the Tat system comprises two distinct complexes: a TatABC complex, containing multiple copies of TatA, TatB and TatC subunits, and a separate TatA complex, containing only TatA subunits. Substrates initially bind to the TatABC complex, which probably triggers association of the separate TatA complex to form the active translocon.

Its subcellular location is the cell membrane. Part of the twin-arginine translocation (Tat) system that transports large folded proteins containing a characteristic twin-arginine motif in their signal peptide across membranes. Together with TatC, TatB is part of a receptor directly interacting with Tat signal peptides. TatB may form an oligomeric binding site that transiently accommodates folded Tat precursor proteins before their translocation. This Mycobacteroides abscessus (strain ATCC 19977 / DSM 44196 / CCUG 20993 / CIP 104536 / JCM 13569 / NCTC 13031 / TMC 1543 / L948) (Mycobacterium abscessus) protein is Sec-independent protein translocase protein TatB.